Reading from the N-terminus, the 209-residue chain is Small ribosomal subunit protein uS4 (209 aa).

The region spanning 98–159 (RRLDSAVYRL…KSRKITRIND (62 aa)) is the S4 RNA-binding domain.

It belongs to the universal ribosomal protein uS4 family. As to quaternary structure, part of the 30S ribosomal subunit. Contacts protein S5. The interaction surface between S4 and S5 is involved in control of translational fidelity.

Its function is as follows. One of the primary rRNA binding proteins, it binds directly to 16S rRNA where it nucleates assembly of the body of the 30S subunit. Functionally, with S5 and S12 plays an important role in translational accuracy. This chain is Small ribosomal subunit protein uS4, found in Syntrophotalea carbinolica (strain DSM 2380 / NBRC 103641 / GraBd1) (Pelobacter carbinolicus).